The primary structure comprises 126 residues: Protein Wnt-1 (126 aa).

Residue S1 is the site of O-palmitoleoyl serine; by PORCN attachment. C92 and C107 are joined by a disulfide. N-linked (GlcNAc...) asparagine glycosylation is found at N93 and N123.

It belongs to the Wnt family. Post-translationally, palmitoleoylation is required for efficient binding to frizzled receptors. Palmitoleoylation is necessary for proper trafficking to cell surface. Depalmitoleoylated by NOTUM, leading to inhibit Wnt signaling pathway.

It is found in the secreted. It localises to the extracellular space. The protein resides in the extracellular matrix. In terms of biological role, ligand for members of the frizzled family of seven transmembrane receptors. Acts in the canonical Wnt signaling pathway by promoting beta-catenin-dependent transcriptional activation. Plays an essential role in the development of the embryonic brain and central nervous system (CNS). Has a role in osteoblast function, bone development and bone homeostasis. This chain is Protein Wnt-1 (WNT-1), found in Pituophis melanoleucus (Pine snake).